The primary structure comprises 307 residues: Malate dehydrogenase (307 aa).

NAD(+) is bound by residues 8 to 13 and Asp-33; that span reads GAGRVG. Substrate contacts are provided by Arg-82 and Arg-88. Residues Asn-95 and 118–120 contribute to the NAD(+) site; that span reads VSN. Substrate is bound by residues Asn-120 and Arg-151. His-175 acts as the Proton acceptor in catalysis.

This sequence belongs to the LDH/MDH superfamily. MDH type 3 family.

The catalysed reaction is (S)-malate + NAD(+) = oxaloacetate + NADH + H(+). Its function is as follows. Catalyzes the reversible oxidation of malate to oxaloacetate. This chain is Malate dehydrogenase, found in Thioalkalivibrio sulfidiphilus (strain HL-EbGR7).